A 360-amino-acid polypeptide reads, in one-letter code: 3-isopropylmalate dehydrogenase (360 aa).

Residue 76–89 (GPKWDKIERDIRPE) participates in NAD(+) binding. Substrate is bound by residues arginine 96, arginine 106, arginine 134, and aspartate 224. Mg(2+) contacts are provided by aspartate 224, aspartate 248, and aspartate 252. 282–294 (GSAPDIAGLGIAN) contributes to the NAD(+) binding site.

Belongs to the isocitrate and isopropylmalate dehydrogenases family. LeuB type 1 subfamily. In terms of assembly, homodimer. The cofactor is Mg(2+). Requires Mn(2+) as cofactor.

The protein resides in the cytoplasm. It catalyses the reaction (2R,3S)-3-isopropylmalate + NAD(+) = 4-methyl-2-oxopentanoate + CO2 + NADH. It functions in the pathway amino-acid biosynthesis; L-leucine biosynthesis; L-leucine from 3-methyl-2-oxobutanoate: step 3/4. Functionally, catalyzes the oxidation of 3-carboxy-2-hydroxy-4-methylpentanoate (3-isopropylmalate) to 3-carboxy-4-methyl-2-oxopentanoate. The product decarboxylates to 4-methyl-2 oxopentanoate. This chain is 3-isopropylmalate dehydrogenase, found in Pseudomonas putida (strain ATCC 47054 / DSM 6125 / CFBP 8728 / NCIMB 11950 / KT2440).